A 62-amino-acid chain; its full sequence is Metallothionein-4 (62 aa).

A divalent metal cation contacts are provided by Cys6, Cys8, Cys14, Cys16, Cys20, Cys22, Cys25, Cys27, Cys30, Cys34, Cys35, Cys37, Cys38, Cys42, Cys45, Cys49, Cys51, Cys58, Cys60, and Cys61.

This sequence belongs to the metallothionein superfamily. Type 1 family. In terms of tissue distribution, expressed exclusively in stratified squamous epithelia associated with oral epithelia, esophagus, upper stomach, tail, footpads and neonatal skin.

In terms of biological role, seems to bind zinc and copper. Could play a special role in regulating zinc metabolism during the differentiation of stratified epithelia. The polypeptide is Metallothionein-4 (Mt4) (Mus musculus (Mouse)).